A 246-amino-acid polypeptide reads, in one-letter code: MKKPPVPLLQGGVRADGRAPDQMREVQISVGVISNADGSAMVSYGATTAVAAVYGPREMHPRHLSLPDRGVMRVRYHMAPFSTKDERKSPTPSRREIEISKVLREALEPAVMLEQYPRSRIDVFIEILQADGSTRVASLTAASLALADAGIYMRDLVIGVSVGLVDGTVVLDLNGLEDQYGEGDLPVGYMPNLRRYTLLQLDGAWGRDKLLEALNLAVKGAEFVYQKARDALKNRYMAIAEEIYGR.

It belongs to the RNase PH family. Rrp41 subfamily. As to quaternary structure, component of the archaeal exosome complex. Forms a hexameric ring-like arrangement composed of 3 Rrp41-Rrp42 heterodimers. The hexameric ring associates with a trimer of Rrp4 and/or Csl4 subunits.

The protein resides in the cytoplasm. Functionally, catalytic component of the exosome, which is a complex involved in RNA degradation. Has 3'-&gt;5' exoribonuclease activity. Can also synthesize heteromeric RNA-tails. In Pyrobaculum neutrophilum (strain DSM 2338 / JCM 9278 / NBRC 100436 / V24Sta) (Thermoproteus neutrophilus), this protein is Exosome complex component Rrp41.